Consider the following 111-residue polypeptide: Small ribosomal subunit protein bS16 (111 aa).

Belongs to the bacterial ribosomal protein bS16 family.

This is Small ribosomal subunit protein bS16 from Rickettsia felis (strain ATCC VR-1525 / URRWXCal2) (Rickettsia azadi).